A 366-amino-acid chain; its full sequence is Ribosomal RNA large subunit methyltransferase M (366 aa).

S-adenosyl-L-methionine contacts are provided by residues S188, 221 to 224 (CPGG), D240, D260, and D277. Catalysis depends on K306, which acts as the Proton acceptor.

The protein belongs to the class I-like SAM-binding methyltransferase superfamily. RNA methyltransferase RlmE family. RlmM subfamily. Monomer.

It localises to the cytoplasm. It catalyses the reaction cytidine(2498) in 23S rRNA + S-adenosyl-L-methionine = 2'-O-methylcytidine(2498) in 23S rRNA + S-adenosyl-L-homocysteine + H(+). Its function is as follows. Catalyzes the 2'-O-methylation at nucleotide C2498 in 23S rRNA. This chain is Ribosomal RNA large subunit methyltransferase M, found in Citrobacter koseri (strain ATCC BAA-895 / CDC 4225-83 / SGSC4696).